A 307-amino-acid polypeptide reads, in one-letter code: Mitochondrial glycine transporter (307 aa).

3 Solcar repeats span residues 8-87 (PRNS…MRSS), 115-199 (LTMY…SKQL), and 221-305 (TSTT…LVKR). 6 helical membrane passes run 14–39 (LIGGFFGGLTSAVALQPLDLLKTRIQ), 62–88 (GTLPSALRTSIGSALYLSCLNLMRSSL), 121–146 (LLTGAFARGLVGYITMPITVIKVRYE), 174–197 (GFGATCLRDAPYAGLYVLLYEKSK), 225–251 (VNTTSAVLSASLATTVTAPFDTIKTRM), and 280–298 (GLSMRLARKALSAGIAWGI).

The protein belongs to the mitochondrial carrier (TC 2.A.29) family. SLC25A38 subfamily.

It is found in the mitochondrion inner membrane. The catalysed reaction is glycine(in) = glycine(out). Its function is as follows. Mitochondrial glycine transporter that imports glycine into the mitochondrial matrix. Plays an important role in providing glycine for the first enzymatic step in heme biosynthesis, the condensation of glycine with succinyl-CoA to produce 5-aminolevulinate (ALA) in the mitochondrial matrix. The protein is Mitochondrial glycine transporter of Saccharomyces cerevisiae (strain RM11-1a) (Baker's yeast).